The sequence spans 416 residues: Calreticulin (416 aa).

N-linked (GlcNAc...) asparagine glycosylation is present at N54. Cysteines 108 and 140 form a disulfide. An alpha-D-glucoside-binding residues include Y112, K114, Y131, and D138. 7 consecutive repeat copies span residues 194-205 (KQSGSVYTDWDI), 213-224 (DPEAKKPEDWED), 230-241 (DPEDKKPEGYDD), 248-259 (DPEAKKPEDWDD), 263-273 (GEWTAPTIPNP), 277-287 (GEWKPKKIKNP), and 291-301 (GKWKAPMIDNP). Residues 194-259 (KQSGSVYTDW…EAKKPEDWDD (66 aa)) form a 4 X approximate repeats region. Residues 209–281 (KQIKDPEAKK…NPDYKGEWKP (73 aa)) are disordered. The segment covering 210 to 255 (QIKDPEAKKPEDWEDKEYIPDPEDKKPEGYDDIPKEITDPEAKKPE) has biased composition (basic and acidic residues). The tract at residues 263-301 (GEWTAPTIPNPDYKGEWKPKKIKNPNFKGKWKAPMIDNP) is 3 X approximate repeats. E321 serves as a coordination point for an alpha-D-glucoside. Positions 349–378 (ETWGKNKDAEKAAFDEAEKKKEEEEAKDDP) are enriched in basic and acidic residues. A disordered region spans residues 349 to 416 (ETWGKNKDAE…EDDEDVHDEL (68 aa)). Positions 379 to 416 (TESDDEKPDEEGESDGEGDDESKDIDNEEDDEDVHDEL) are enriched in acidic residues. Positions 413 to 416 (HDEL) match the Prevents secretion from ER motif.

This sequence belongs to the calreticulin family.

It localises to the endoplasmic reticulum lumen. Its function is as follows. Molecular calcium-binding chaperone promoting folding, oligomeric assembly and quality control in the ER via the calreticulin/calnexin cycle. This lectin may interact transiently with almost all of the monoglucosylated glycoproteins that are synthesized in the ER. The protein is Calreticulin of Berberis stolonifera (Barberry).